Consider the following 447-residue polypeptide: Chromosomal replication initiator protein DnaA (447 aa).

Positions 1–74 (MPDVESFWHS…TGFKLTGAEV (74 aa)) are domain I, interacts with DnaA modulators. Positions 74–109 (VMPHFVVADEKDAALAQELEEPAEEEVVFSEQSKKA) are domain II. Residues 110-326 (MLNPKYTFDT…GALVRVQAFA (217 aa)) are domain III, AAA+ region. Glycine 154, glycine 156, lysine 157, and threonine 158 together coordinate ATP. Positions 327–447 (TINGEDITTS…VSEIKNLLNS (121 aa)) are domain IV, binds dsDNA.

The protein belongs to the DnaA family. As to quaternary structure, oligomerizes as a right-handed, spiral filament on DNA at oriC.

Its subcellular location is the cytoplasm. Its function is as follows. Plays an essential role in the initiation and regulation of chromosomal replication. ATP-DnaA binds to the origin of replication (oriC) to initiate formation of the DNA replication initiation complex once per cell cycle. Binds the DnaA box (a 9 base pair repeat at the origin) and separates the double-stranded (ds)DNA. Forms a right-handed helical filament on oriC DNA; dsDNA binds to the exterior of the filament while single-stranded (ss)DNA is stabiized in the filament's interior. The ATP-DnaA-oriC complex binds and stabilizes one strand of the AT-rich DNA unwinding element (DUE), permitting loading of DNA polymerase. After initiation quickly degrades to an ADP-DnaA complex that is not apt for DNA replication. Binds acidic phospholipids. In terms of biological role, strand separation requires the DnaA boxes and adjacent DnaA-trio motifs as well as ATP. This chain is Chromosomal replication initiator protein DnaA, found in Enterococcus faecalis (strain ATCC 700802 / V583).